The sequence spans 98 residues: MASRFMTDPHAMRDMAGRFEVHAQTVEDEARRMWASAQNISGAGWSGMAEATSLDTMAQMNQAFRNIVNMLHGVRDGLVRDANNYEQQEQASQQILSS.

The protein belongs to the WXG100 family. CFP-10 subfamily. Strongly interacts with EsxL to form a heterodimeric complex under reducing conditions. The complex is regulated by the redox state of EsxL.

The protein localises to the secreted. The chain is ESAT-6-like protein EsxK from Mycobacterium tuberculosis (strain ATCC 25618 / H37Rv).